The following is a 449-amino-acid chain: MPATLLRAVARSHHILSKAHQCRRIGHLMLKPLKEFENTTCSTLTIRQSLDLFLPDKTASGLNKSQILEMNQKKSDTSMLSPLNAARCQDEKAHLPTMKSFGTHRRVTHKPNLLGSKWFIKILKRHFSSVSTETFVPKQDFPQVKRPLKASRTRQPSRTNLPVLSVNEDLMHCTAFATADEYHLGNLSQDLASHGYVEVTSLPRDAANILVMGVENSAKEGDPGTIFFFREGAAVFWNVKDKTMKHVMKVLEKHEIQPYEIALVHWENEELNYIKIEGQSKLHRGEIKLNSELDLDDAILEKFAFSNALCLSVKLAIWEASLDKFIESIQSIPEALKAGKKVKLSHEEVMQKIGELFALRHRINLSSDFLITPDFYWDRENLEGLYDKTCQFLSIGRRVKVMNEKLQHCMELTDLMRNHLNEKRALRLEWMIVILITIEVMFELGRVFF.

A mitochondrion-targeting transit peptide spans 1–12 (MPATLLRAVARS).

It belongs to the RMD1/sif2 family. As to quaternary structure, homooligomer.

The protein localises to the mitochondrion. Functionally, required for mitochondrial translation, possibly by coordinating the assembly or maintenance of the mitochondrial ribosome. The sequence is that of Required for meiotic nuclear division protein 1 homolog (RMND1) from Homo sapiens (Human).